We begin with the raw amino-acid sequence, 70 residues long: U2-agatoxin-Ao1m (70 aa).

The N-terminal stretch at Met1–Ala20 is a signal peptide. The propeptide occupies Val21 to Arg34. 3 disulfide bridges follow: Cys37–Cys53, Cys44–Cys58, and Cys52–Cys68. Leu69 carries the leucine amide modification.

The protein belongs to the neurotoxin 01 (U2-agtx) family. As to expression, expressed by the venom gland.

The protein resides in the secreted. Insect active toxin causing rapid but reversible paralysis in crickets. No activity shown in mammals. Does not show effect on mammalian voltage-gated calcium channels. The chain is U2-agatoxin-Ao1m from Agelena orientalis (Funnel-web spider).